A 136-amino-acid chain; its full sequence is MRHKIKGRKLNITSSHRQAMLANMAVALVTHEQIKTTLPKAKELRPYIETLITKAKKADLMVRRSVLSKIKDKTAVEKLINILGTRYKDRPGGYTRIIKAGFRYGDLAPIAYIEFVDRDINAKGNIQQDANEEIKN.

Belongs to the bacterial ribosomal protein bL17 family. As to quaternary structure, part of the 50S ribosomal subunit. Contacts protein L32.

The protein is Large ribosomal subunit protein bL17 of Rickettsia conorii (strain ATCC VR-613 / Malish 7).